The following is a 264-amino-acid chain: Virulence plasmid protein pGP3-D (264 aa).

This chain is Virulence plasmid protein pGP3-D, found in Chlamydia psittaci (Chlamydophila psittaci).